Here is a 517-residue protein sequence, read N- to C-terminus: Cytochrome P450 78A5 (517 aa).

A helical transmembrane segment spans residues 20-40 (AFASVSLIIATVAFLLSPGGL). Residue Cys459 coordinates heme.

Belongs to the cytochrome P450 family. Heme is required as a cofactor. In terms of tissue distribution, expressed in the periphery of the shoot apical meristem and inflorescence meristem, on the adaxial sides of developing floral organs and in developing ovules in the region where the integuments emerge.

It localises to the membrane. Plays a role in regulating directional growth at the meristem/organ boundary. Is required for the promotion of leaf and floral organ growth and for the prolongation of the plastochron. Promotes organ growth in a non-cell-autonomous manner and may generate a mobile growth signal distinct from the classical phytohormones that prevents premature arrest of proliferation, until the correct primordium size has been reached. Functions probably in association with CYP78A7 in regulating relative growth of the shoot apical meristem and plant organs. Is required locally in developing ovules to stimulates cell proliferation and promote seed growth. In Arabidopsis thaliana (Mouse-ear cress), this protein is Cytochrome P450 78A5 (CYP78A5).